The sequence spans 331 residues: MSTKEKLISHVMKEEPVGSRNKVTVVGVGMVGMASAVSILLKDLCDELAMVDVMEDKLKGEVMDLQHGSLFLKTKIVGDKDYSVTANSKVVVVTAGARQQEGESRLNLVQRNVNIFKFIIPNIVKYSPNCILMVVSNPVDILTYVAWKLSGFPRHRVIGSGTNLDSARFRHLIGEKLHLHPSSCHAWIVGEHGDSSVPVWSGVNVAGVSLQGLNPQMGTEGDGENWKAIHKEVVDGAYEVIKLKGYTSWAIGMSVADLVESIIKNMHKVHPVSTLVQGMHGVKDEVFLSVPCVLGNSGLTDVIHMTLKAEEEKQVQKSAETLWGVQKELIL.

Residues 29–57 (GMVGMASAVSILLKDLCDELAMVDVMEDK) and Arg-98 each bind NAD(+). The substrate site is built by Arg-105, Asn-137, and Arg-168. Asn-137 lines the NAD(+) pocket. His-192 (proton acceptor) is an active-site residue. Substrate is bound at residue Thr-247.

This sequence belongs to the LDH/MDH superfamily. LDH family. In terms of assembly, homotetramer.

The protein localises to the cytoplasm. It catalyses the reaction (S)-lactate + NAD(+) = pyruvate + NADH + H(+). It participates in fermentation; pyruvate fermentation to lactate; (S)-lactate from pyruvate: step 1/1. In terms of biological role, interconverts simultaneously and stereospecifically pyruvate and lactate with concomitant interconversion of NADH and NAD(+). The chain is L-lactate dehydrogenase A chain (ldha) from Notothenia neglecta (Yellowbelly rockcod).